The sequence spans 890 residues: DNA mismatch repair protein MutS (890 aa).

607 to 614 contributes to the ATP binding site; it reads GPNMSGKS.

The protein belongs to the DNA mismatch repair MutS family.

In terms of biological role, this protein is involved in the repair of mismatches in DNA. It is possible that it carries out the mismatch recognition step. This protein has a weak ATPase activity. The sequence is that of DNA mismatch repair protein MutS from Bacillus thuringiensis (strain Al Hakam).